A 504-amino-acid polypeptide reads, in one-letter code: Maturase K (504 aa).

Belongs to the intron maturase 2 family. MatK subfamily.

It localises to the plastid. It is found in the chloroplast. In terms of biological role, usually encoded in the trnK tRNA gene intron. Probably assists in splicing its own and other chloroplast group II introns. The polypeptide is Maturase K (Actinidia deliciosa (Kiwi)).